Reading from the N-terminus, the 399-residue chain is Chorismate synthase (399 aa).

2 residues coordinate NADP(+): R40 and R46. Residues 134–136, 255–256, G299, 314–318, and R340 each bind FMN; these read RAS, QA, and KPIST.

The protein belongs to the chorismate synthase family. As to quaternary structure, homotetramer. It depends on FMNH2 as a cofactor.

The enzyme catalyses 5-O-(1-carboxyvinyl)-3-phosphoshikimate = chorismate + phosphate. It participates in metabolic intermediate biosynthesis; chorismate biosynthesis; chorismate from D-erythrose 4-phosphate and phosphoenolpyruvate: step 7/7. In terms of biological role, catalyzes the anti-1,4-elimination of the C-3 phosphate and the C-6 proR hydrogen from 5-enolpyruvylshikimate-3-phosphate (EPSP) to yield chorismate, which is the branch point compound that serves as the starting substrate for the three terminal pathways of aromatic amino acid biosynthesis. This reaction introduces a second double bond into the aromatic ring system. This Mycolicibacterium smegmatis (strain ATCC 700084 / mc(2)155) (Mycobacterium smegmatis) protein is Chorismate synthase.